The primary structure comprises 391 residues: Succinate--CoA ligase [ADP-forming] subunit beta (391 aa).

Residues 9 to 248 (KDILRKFGVS…TGEEDPFEVE (240 aa)) enclose the ATP-grasp domain. Residues Lys50, 57–59 (GRG), Glu103, Met106, and Glu111 contribute to the ATP site. 2 residues coordinate Mg(2+): Asn203 and Asp217. Residues Asn268 and 325 to 327 (GIV) each bind substrate.

The protein belongs to the succinate/malate CoA ligase beta subunit family. In terms of assembly, heterotetramer of two alpha and two beta subunits. Mg(2+) serves as cofactor.

The catalysed reaction is succinate + ATP + CoA = succinyl-CoA + ADP + phosphate. It carries out the reaction GTP + succinate + CoA = succinyl-CoA + GDP + phosphate. It participates in carbohydrate metabolism; tricarboxylic acid cycle; succinate from succinyl-CoA (ligase route): step 1/1. Functionally, succinyl-CoA synthetase functions in the citric acid cycle (TCA), coupling the hydrolysis of succinyl-CoA to the synthesis of either ATP or GTP and thus represents the only step of substrate-level phosphorylation in the TCA. The beta subunit provides nucleotide specificity of the enzyme and binds the substrate succinate, while the binding sites for coenzyme A and phosphate are found in the alpha subunit. This chain is Succinate--CoA ligase [ADP-forming] subunit beta, found in Chlorobium phaeobacteroides (strain BS1).